A 438-amino-acid polypeptide reads, in one-letter code: Protein SPMIP7 (438 aa).

Testis-specific.

In terms of biological role, essential for normal spermatogenesis. This chain is Protein SPMIP7, found in Homo sapiens (Human).